The following is a 301-amino-acid chain: GTPase Era (301 aa).

The Era-type G domain occupies 4–173 (KAGFVALIGK…LECISEHLSP (170 aa)). Residues 12-19 (GKPNAGKS) are G1. 12–19 (GKPNAGKS) lines the GTP pocket. The segment at 38–42 (NATRK) is G2. The segment at 64 to 67 (DTPG) is G3. Residues 64–68 (DTPGL) and 122–125 (SKID) each bind GTP. Positions 122–125 (SKID) are G4. The segment at 152–154 (LSA) is G5. Residues 204–280 (LSDEIPYESD…FLNLQVIAQK (77 aa)) enclose the KH type-2 domain.

The protein belongs to the TRAFAC class TrmE-Era-EngA-EngB-Septin-like GTPase superfamily. Era GTPase family. Monomer.

Its subcellular location is the cytoplasm. It is found in the cell inner membrane. An essential GTPase that binds both GDP and GTP, with rapid nucleotide exchange. Plays a role in 16S rRNA processing and 30S ribosomal subunit biogenesis and possibly also in cell cycle regulation and energy metabolism. In Helicobacter acinonychis (strain Sheeba), this protein is GTPase Era.